The sequence spans 269 residues: Sororin (269 aa).

Disordered regions lie at residues 1–39, 56–110, and 146–169; these read MSEG…IMKR, VNTG…PKIN, and SLNS…STPN. Residues 57–66 are compositionally biased toward polar residues; the sequence is NTGSQSTPKV. The short motif at 85–87 is the KEN box element; the sequence is KEN. Residues 146–155 are compositionally biased toward low complexity; the sequence is SLNSSSSLYS. The FGF motif signature appears at 180–182; it reads FGF. The interval 247–269 is C-terminal Sororin domain; that stretch reads LDEWAAFMNAEFEEAEKFDLTVE.

It belongs to the sororin family. In terms of assembly, interacts with the APC/C complex. Interacts with the chromatin-bound cohesin complex; the interaction is indirect, occurs after DNA replication and requires acetylation of the cohesin component smc3. Interacts (via the FGF motif) with pds5a and pds5b; the interaction is direct and prevents the interaction of pds5a with wapl. In terms of processing, ubiquitinated by the APC/C complex in G1, leading to its degradation.

The protein resides in the nucleus. It localises to the chromosome. Its subcellular location is the cytoplasm. Its function is as follows. Regulator of sister chromatid cohesion in mitosis stabilizing cohesin complex association with chromatin. May antagonize the action of wapl which stimulates cohesin dissociation from chromatin. Cohesion ensures that chromosome partitioning is accurate in both meiotic and mitotic cells and plays an important role in DNA repair. Required for efficient DNA double-stranded break repair. In Xenopus laevis (African clawed frog), this protein is Sororin (cdca5-a).